The sequence spans 238 residues: Ribonuclease PH (238 aa).

Residues Arg-86 and 124–126 (GTR) contribute to the phosphate site.

It belongs to the RNase PH family. Homohexameric ring arranged as a trimer of dimers.

The enzyme catalyses tRNA(n+1) + phosphate = tRNA(n) + a ribonucleoside 5'-diphosphate. Phosphorolytic 3'-5' exoribonuclease that plays an important role in tRNA 3'-end maturation. Removes nucleotide residues following the 3'-CCA terminus of tRNAs; can also add nucleotides to the ends of RNA molecules by using nucleoside diphosphates as substrates, but this may not be physiologically important. Probably plays a role in initiation of 16S rRNA degradation (leading to ribosome degradation) during starvation. The sequence is that of Ribonuclease PH from Anaeromyxobacter sp. (strain Fw109-5).